Here is a 342-residue protein sequence, read N- to C-terminus: MTETAELTAATDADVLAVAREQVLEQGVGLTQEQVLRVLQLPDDRLEELLALAHEVRMRWCGPEVEVEGIISLKTGGCPEDCHFCSQSGLFASPVRSAWLDIPSLVEAAKQTAKSGATEFCIVAAVRGPDERLLAQVAAGIEAIRNEVDIQIACSLGMLTQEQVDRLSAMGVHRYNHNLETAKSHFPNVVTTHSWEERWDTLKMVREAGMEVCCGGILGMGETLEQRAEFAANLAELEPDEVPLNFLNPRPGTPFGDLEVLPASDALRAVAAFRLALPRTMLRFAGGREITLGDLGAKQGILGGINAVIVGNYLTTLGRPAEADLELLDDLQMPIKALNSSL.

The 226-residue stretch at 63-288 (PEVEVEGIIS…RTMLRFAGGR (226 aa)) folds into the Radical SAM core domain. Cys78, Cys82, and Cys85 together coordinate [4Fe-4S] cluster. The [2Fe-2S] cluster site is built by Cys121, Cys154, Cys213, and Arg283.

This sequence belongs to the radical SAM superfamily. Biotin synthase family. Homodimer. Requires [4Fe-4S] cluster as cofactor. [2Fe-2S] cluster is required as a cofactor.

The enzyme catalyses (4R,5S)-dethiobiotin + (sulfur carrier)-SH + 2 reduced [2Fe-2S]-[ferredoxin] + 2 S-adenosyl-L-methionine = (sulfur carrier)-H + biotin + 2 5'-deoxyadenosine + 2 L-methionine + 2 oxidized [2Fe-2S]-[ferredoxin]. The protein operates within cofactor biosynthesis; biotin biosynthesis; biotin from 7,8-diaminononanoate: step 2/2. Functionally, catalyzes the conversion of dethiobiotin (DTB) to biotin by the insertion of a sulfur atom into dethiobiotin via a radical-based mechanism. The chain is Biotin synthase from Mycobacteroides abscessus (strain ATCC 19977 / DSM 44196 / CCUG 20993 / CIP 104536 / JCM 13569 / NCTC 13031 / TMC 1543 / L948) (Mycobacterium abscessus).